The primary structure comprises 200 residues: 7-methyl-GTP pyrophosphatase (200 aa).

Residue D75 is the Proton acceptor of the active site.

The protein belongs to the Maf family. YceF subfamily. A divalent metal cation serves as cofactor.

The protein resides in the cytoplasm. It catalyses the reaction N(7)-methyl-GTP + H2O = N(7)-methyl-GMP + diphosphate + H(+). In terms of biological role, nucleoside triphosphate pyrophosphatase that hydrolyzes 7-methyl-GTP (m(7)GTP). May have a dual role in cell division arrest and in preventing the incorporation of modified nucleotides into cellular nucleic acids. This chain is 7-methyl-GTP pyrophosphatase, found in Hydrogenovibrio crunogenus (strain DSM 25203 / XCL-2) (Thiomicrospira crunogena).